The chain runs to 356 residues: Dihydroorotate dehydrogenase (quinone) (356 aa).

FMN is bound by residues 67 to 71 (PGFDK) and Thr91. Lys71 lines the substrate pocket. 116-120 (NRMGF) contributes to the substrate binding site. FMN is bound by residues Asn147 and Asn178. Position 178 (Asn178) interacts with substrate. Residue Ser181 is the Nucleophile of the active site. Asn183 contacts substrate. Positions 218 and 246 each coordinate FMN. Substrate is bound at residue 247–248 (NT). FMN contacts are provided by residues Gly268, Gly297, and 318 to 319 (YS).

Belongs to the dihydroorotate dehydrogenase family. Type 2 subfamily. In terms of assembly, monomer. The cofactor is FMN.

It is found in the cell membrane. The catalysed reaction is (S)-dihydroorotate + a quinone = orotate + a quinol. The protein operates within pyrimidine metabolism; UMP biosynthesis via de novo pathway; orotate from (S)-dihydroorotate (quinone route): step 1/1. Catalyzes the conversion of dihydroorotate to orotate with quinone as electron acceptor. This Sphingopyxis alaskensis (strain DSM 13593 / LMG 18877 / RB2256) (Sphingomonas alaskensis) protein is Dihydroorotate dehydrogenase (quinone).